Here is a 244-residue protein sequence, read N- to C-terminus: Small ribosomal subunit protein eS4 (244 aa).

The S4 RNA-binding domain occupies 43-106 (LPLLLVVRDV…DENYLVLFDE (64 aa)).

This sequence belongs to the eukaryotic ribosomal protein eS4 family.

The polypeptide is Small ribosomal subunit protein eS4 (Methanococcus maripaludis (strain C7 / ATCC BAA-1331)).